Here is an 89-residue protein sequence, read N- to C-terminus: Large ribosomal subunit protein bL31B (89 aa).

Belongs to the bacterial ribosomal protein bL31 family. Type B subfamily. In terms of assembly, part of the 50S ribosomal subunit.

The polypeptide is Large ribosomal subunit protein bL31B (Corynebacterium urealyticum (strain ATCC 43042 / DSM 7109)).